The following is a 188-amino-acid chain: MSRLRIFDDHTPDTPFFVSKEQAQITAELHKIGITFERWEATQAIEPGATAEQVMAAYRTDIDRLIATHGFKTVDVISIAPDNAKREEMRAKFLEEHFHKEDEVRFFVAGSGLFTVHSGNKVYEIECVKNDLIAIPDGTLHWFDMGAAPYFVAIRFFTEPDGWVGHFTGTDIAQRFPRYIPEGCQSAH.

Fe(2+)-binding residues include His-97, His-99, Glu-103, and His-141. Residues His-97, His-99, Glu-103, and His-141 each contribute to the Ni(2+) site.

Belongs to the acireductone dioxygenase (ARD) family. As to quaternary structure, monomer. Fe(2+) serves as cofactor. Requires Ni(2+) as cofactor.

The catalysed reaction is 1,2-dihydroxy-5-(methylsulfanyl)pent-1-en-3-one + O2 = 3-(methylsulfanyl)propanoate + CO + formate + 2 H(+). It carries out the reaction 1,2-dihydroxy-5-(methylsulfanyl)pent-1-en-3-one + O2 = 4-methylsulfanyl-2-oxobutanoate + formate + 2 H(+). Its pathway is amino-acid biosynthesis; L-methionine biosynthesis via salvage pathway; L-methionine from S-methyl-5-thio-alpha-D-ribose 1-phosphate: step 5/6. Catalyzes 2 different reactions between oxygen and the acireductone 1,2-dihydroxy-3-keto-5-methylthiopentene (DHK-MTPene) depending upon the metal bound in the active site. Fe-containing acireductone dioxygenase (Fe-ARD) produces formate and 2-keto-4-methylthiobutyrate (KMTB), the alpha-ketoacid precursor of methionine in the methionine recycle pathway. Ni-containing acireductone dioxygenase (Ni-ARD) produces methylthiopropionate, carbon monoxide and formate, and does not lie on the methionine recycle pathway. This is Acireductone dioxygenase from Xylella fastidiosa (strain M23).